We begin with the raw amino-acid sequence, 407 residues long: 1-deoxy-D-xylulose 5-phosphate reductoisomerase (407 aa).

The NADPH site is built by T25, G26, S27, I28, N53, and N136. K137 is a binding site for 1-deoxy-D-xylulose 5-phosphate. NADPH is bound at residue E138. D162 serves as a coordination point for Mn(2+). 4 residues coordinate 1-deoxy-D-xylulose 5-phosphate: S163, E164, S188, and H211. E164 is a binding site for Mn(2+). G217 is an NADPH binding site. Residues S224, N229, K230, and E233 each coordinate 1-deoxy-D-xylulose 5-phosphate. E233 provides a ligand contact to Mn(2+).

The protein belongs to the DXR family. It depends on Mg(2+) as a cofactor. The cofactor is Mn(2+).

The enzyme catalyses 2-C-methyl-D-erythritol 4-phosphate + NADP(+) = 1-deoxy-D-xylulose 5-phosphate + NADPH + H(+). It participates in isoprenoid biosynthesis; isopentenyl diphosphate biosynthesis via DXP pathway; isopentenyl diphosphate from 1-deoxy-D-xylulose 5-phosphate: step 1/6. In terms of biological role, catalyzes the NADPH-dependent rearrangement and reduction of 1-deoxy-D-xylulose-5-phosphate (DXP) to 2-C-methyl-D-erythritol 4-phosphate (MEP). In Bradyrhizobium diazoefficiens (strain JCM 10833 / BCRC 13528 / IAM 13628 / NBRC 14792 / USDA 110), this protein is 1-deoxy-D-xylulose 5-phosphate reductoisomerase.